The primary structure comprises 390 residues: Scoulerine-9-O-methyltransferase 1 (390 aa).

Glu-153 contributes to the substrate binding site. S-adenosyl-L-methionine-binding positions include Met-207, Ser-211, Gly-235, Asp-258, 278 to 279 (DM), and Lys-292. His-296 serves as the catalytic Proton acceptor. Position 296-297 (296-297 (HD)) interacts with substrate.

This sequence belongs to the class I-like SAM-binding methyltransferase superfamily. Cation-independent O-methyltransferase family. COMT subfamily. In terms of assembly, homodimer. As to expression, highly expressed in capsules. Expressed is stems. Expressed at low levels in roots.

The catalysed reaction is (S)-scoulerine + S-adenosyl-L-methionine = (S)-tetrahydrocolumbamine + S-adenosyl-L-homocysteine + H(+). It carries out the reaction (S)-tetrahydrocolumbamine + S-adenosyl-L-methionine = (S)-tetrahydropalmatine + S-adenosyl-L-homocysteine + H(+). The enzyme catalyses (S)-norreticuline + S-adenosyl-L-methionine = (S)-norcodamine + S-adenosyl-L-homocysteine + H(+). It catalyses the reaction (S)-reticuline + S-adenosyl-L-methionine = (S)-codamine + S-adenosyl-L-homocysteine + H(+). Its pathway is alkaloid biosynthesis. Its function is as follows. Methyltransferase involved in the biosynthesis of the benzylisoquinoline alkaloid noscapine. Catalyzes the conversion of (S)-scoulerine to (S)-tetrahydrocolumbamine. Can convert (S)-tetrahydrocolumbamine to tetrahydropalmatine. Can convert (S)-norreticuline to (S)-norcodamine. Can convert (S)-reticuline to (S)-codamine. Substrate preference is (S)-scoulerine &gt; (S)-tetrahydrocolumbamine &gt; (S)-norreticuline &gt; (S)-reticuline. This Papaver somniferum (Opium poppy) protein is Scoulerine-9-O-methyltransferase 1.